The chain runs to 120 residues: NAD(P)H-quinone oxidoreductase subunit 3, chloroplastic (120 aa).

3 helical membrane passes run 9 to 29 (IFWAFLIISSVIPILAFLISG), 64 to 84 (MFALVFVVFDVETVFLYPWAM), and 88 to 108 (VLGVPVFIEALIFVLILIVGS).

Belongs to the complex I subunit 3 family. NDH is composed of at least 16 different subunits, 5 of which are encoded in the nucleus.

Its subcellular location is the plastid. The protein resides in the chloroplast thylakoid membrane. The enzyme catalyses a plastoquinone + NADH + (n+1) H(+)(in) = a plastoquinol + NAD(+) + n H(+)(out). It catalyses the reaction a plastoquinone + NADPH + (n+1) H(+)(in) = a plastoquinol + NADP(+) + n H(+)(out). Its function is as follows. NDH shuttles electrons from NAD(P)H:plastoquinone, via FMN and iron-sulfur (Fe-S) centers, to quinones in the photosynthetic chain and possibly in a chloroplast respiratory chain. The immediate electron acceptor for the enzyme in this species is believed to be plastoquinone. Couples the redox reaction to proton translocation, and thus conserves the redox energy in a proton gradient. This is NAD(P)H-quinone oxidoreductase subunit 3, chloroplastic from Platanus occidentalis (Sycamore).